The sequence spans 122 residues: Large ribosomal subunit protein uL14 (122 aa).

Belongs to the universal ribosomal protein uL14 family. Part of the 50S ribosomal subunit. Forms a cluster with proteins L3 and L19. In the 70S ribosome, L14 and L19 interact and together make contacts with the 16S rRNA in bridges B5 and B8.

Functionally, binds to 23S rRNA. Forms part of two intersubunit bridges in the 70S ribosome. This is Large ribosomal subunit protein uL14 from Rickettsia felis (strain ATCC VR-1525 / URRWXCal2) (Rickettsia azadi).